Consider the following 100-residue polypeptide: Large ribosomal subunit protein bL21 (100 aa).

This sequence belongs to the bacterial ribosomal protein bL21 family. In terms of assembly, part of the 50S ribosomal subunit. Contacts protein L20.

Its function is as follows. This protein binds to 23S rRNA in the presence of protein L20. The polypeptide is Large ribosomal subunit protein bL21 (Mycoplasma genitalium (strain ATCC 33530 / DSM 19775 / NCTC 10195 / G37) (Mycoplasmoides genitalium)).